We begin with the raw amino-acid sequence, 428 residues long: MGNCYTVGPNEALVVSGGCCGSDGKTYTVGGWAWAWWLITDIQKITLEIMTLQPKCEDVETAEGVAITVTGVAQVKVMTDNELLGYACEQFLGKTVTEIKSVILQTLEGHLRSILGTLTVEQIYQDRDQFAKLVREVAAPDVGRMGIEILSFTIKDVYDKVDYLSSLGKSQTAAVQRDADIGVAEAERDAGIREAECKKEMMDIKFQADTKMADSKRELEMQKAAFNQEVNTKKAEAQLAYELQAAKEQQKIRLEEIEIEVVQRKKQISIEEKEILRTDKELIATVRRPAEAEAFKMEQLAEAKKIKKVLTAQAEAEKIKRIGEAEAGSIEAVGKAEAEKMRLKAEAYQQYGEAAKTALVLEALPKIAGKVAAPLGRTNEIVILSGDGGRVTGEVNRLLAELPVSVNALTGVDLSKIPLLQKMTNPQA.

S-palmitoyl cysteine attachment occurs at residues Cys-4, Cys-19, and Cys-20.

This sequence belongs to the band 7/mec-2 family. Flotillin subfamily. Heterooligomer; Heterooligomerizes with ic complex of flotillins 1 and 2. Post-translationally, palmitoylation may be required for the formation of higher order complexes and for neurite outgrowth in cultured neural stem cells.

Its subcellular location is the membrane. It is found in the endosome. Functionally, may play a role in axon growth and regeneration. May be involved in epidermal cell adhesion and epidermal structure and function. The polypeptide is Flotillin-2a (flot2a) (Danio rerio (Zebrafish)).